The sequence spans 257 residues: MKTHKIFWLNLAAIIIISIVVSGGMFLAMKWEQIHLKDGLKKVLSTYPIKNLETLYEIDGHDNPHYENNDQDTWYIESSYSVVGSDELLKEDRMLLKVDKNTHKITGEYDTTTNDRKDATDSTYKSYPVKVVNNKIVFTKDVKDPALKQKIENNQFLIQSGDLTSILNSNDLKVTHDPTTDYYNLSGKLSNDNPNVKQLKRRYNIPSNASTKVELKGMSDLKGNNHQDQKLYFYFSSPGKNQIIYKESLTYNKLSEH.

The helical transmembrane segment at 6-26 (IFWLNLAAIIIISIVVSGGMF) threads the bilayer.

The protein belongs to the staphylococcal tandem lipoprotein family.

The protein localises to the cell membrane. This is an uncharacterized protein from Staphylococcus aureus (strain Mu50 / ATCC 700699).